A 570-amino-acid polypeptide reads, in one-letter code: Hydroxylamine reductase (570 aa).

[4Fe-4S] cluster-binding residues include Cys5, Cys8, Cys17, and Cys23. Residues His266, Glu290, Cys334, Cys425, Cys453, Cys478, Glu513, and Lys515 each coordinate hybrid [4Fe-2O-2S] cluster. At Cys425 the chain carries Cysteine persulfide.

This sequence belongs to the HCP family. The cofactor is [4Fe-4S] cluster. It depends on hybrid [4Fe-2O-2S] cluster as a cofactor.

The protein localises to the cytoplasm. It carries out the reaction A + NH4(+) + H2O = hydroxylamine + AH2 + H(+). Functionally, catalyzes the reduction of hydroxylamine to form NH(3) and H(2)O. This Clostridium botulinum (strain Kyoto / Type A2) protein is Hydroxylamine reductase.